The primary structure comprises 203 residues: Guanylate kinase (203 aa).

One can recognise a Guanylate kinase-like domain in the interval 5 to 183 (GVLYIISAPS…AVEELKSVVV (179 aa)). 12 to 19 (APSGAGKT) lines the ATP pocket.

Belongs to the guanylate kinase family.

It localises to the cytoplasm. It carries out the reaction GMP + ATP = GDP + ADP. Functionally, essential for recycling GMP and indirectly, cGMP. The polypeptide is Guanylate kinase (Geobacter metallireducens (strain ATCC 53774 / DSM 7210 / GS-15)).